Reading from the N-terminus, the 138-residue chain is Acidic phospholipase A2 RV-7 (138 aa).

Residues 1-16 form the signal peptide; it reads MRTLWIVAVCLIGVEG. 7 cysteine pairs are disulfide-bonded: C42–C131, C44–C60, C59–C111, C65–C138, C66–C104, C73–C97, and C91–C102. The Ca(2+) site is built by Y43, G45, and G47. Residue H63 is part of the active site. D64 contributes to the Ca(2+) binding site. D105 is an active-site residue.

Belongs to the phospholipase A2 family. Group II subfamily. D49 sub-subfamily. In terms of assembly, heterodimer of a weakly toxic basic protein having phospholipase A2 activity (RV-4) and a non-toxic acidic protein which inhibits its enzymatic activity but potentiates its lethal potency and neurotoxicity (RV-7). Ca(2+) serves as cofactor. Expressed by the venom gland.

It localises to the secreted. The catalysed reaction is a 1,2-diacyl-sn-glycero-3-phosphocholine + H2O = a 1-acyl-sn-glycero-3-phosphocholine + a fatty acid + H(+). Heterodimer: RV-4/RV-7 targets the presynaptic sites of the neuromuscular junction. Its function is as follows. Monomer: snake venom phospholipase A2 (PLA2) RV-7 that has low enzymatic activity and is not toxic. It inhibits the enzymatic activity of RV-4 in vitro but potentiates its lethal potency and neurotoxicity. It may facilitate the specific binding of RV-4 to its presynaptic binding sites, probably by acting as a chaperone, minimizing distraction and destruction of RV-4 en route to the site of action by reducing non-specific binding to muscle and other organs. PLA2 catalyzes the calcium-dependent hydrolysis of the 2-acyl groups in 3-sn-phosphoglycerides. This Daboia siamensis (Eastern Russel's viper) protein is Acidic phospholipase A2 RV-7.